Here is a 445-residue protein sequence, read N- to C-terminus: Exodeoxyribonuclease 7 large subunit (445 aa).

Belongs to the XseA family. Heterooligomer composed of large and small subunits.

The protein resides in the cytoplasm. The enzyme catalyses Exonucleolytic cleavage in either 5'- to 3'- or 3'- to 5'-direction to yield nucleoside 5'-phosphates.. Functionally, bidirectionally degrades single-stranded DNA into large acid-insoluble oligonucleotides, which are then degraded further into small acid-soluble oligonucleotides. The sequence is that of Exodeoxyribonuclease 7 large subunit from Xanthomonas oryzae pv. oryzae (strain KACC10331 / KXO85).